Consider the following 492-residue polypeptide: 56 kDa U1 small nuclear ribonucleoprotein component (492 aa).

Basic residues predominate over residues M1–P15. Disordered regions lie at residues M1 to K35 and D300 to G371. Residues Q18–D30 show a composition bias toward polar residues. The segment covering S310–S321 has biased composition (low complexity). The span at T329 to H353 shows a compositional bias: polar residues.

In terms of assembly, component of the 18S U1 snRNP particle, a subcomplex of the spliceosome. Interacts with the nuclear cap-binding complex CBC1-CBC2 (yCBC). Directly contacts intronic sequences of substrate pre-RNA.

It is found in the nucleus. Functionally, component of the U1 snRNP particle, which recognizes and binds the 5'-splice site of pre-mRNA. Together with other non-snRNP factors, U1 snRNP forms the spliceosomal commitment complex, that targets pre-mRNA to the splicing pathway. This chain is 56 kDa U1 small nuclear ribonucleoprotein component (SNU56), found in Saccharomyces cerevisiae (strain ATCC 204508 / S288c) (Baker's yeast).